Here is a 1577-residue protein sequence, read N- to C-terminus: MEPGSVVRAIFDFCPSVSEELPLFVGDVIEVLTVVDEFWLLGKKEDVTGQFPSSFVEIVTIPSLKEGERLFVCTCDFISREPNSLSLHRGDLVIIDGTPTAGWLQGRSSLGARGFFPSSCIHELCLSSQSRQWHSQNMLLQVPEYSMGQARALMGLSAQLDEELDFREGDVITIIGVPEPGWFEGELEGRRGIFPEGFVELLGPLRTADESVNAGSGDDSTLNDEVDVSPEEVESEGDEDDQQAGTYGIALYRFQALESNELDFEVGDKIRILGTLEDGWLEGRLKGKTGIFPHRFVKLCPSNRSEETMALPQGDSFPKNSESSAGEMGDSVVEEARQDPQECEEETPDSGLPEQTSEEPLDHVAPECVVDKISGQDEDASGSSPDVDLEGPRAEDPSTPDLSQEVNGISSLPPQVPLQPEEEKSQHYLTAGGSRQCPDTFSKLFPLEAKTRNYSSLPPRRTYTQGWSLQKPAPHLHRASSLTASRVNRPGHFSHTAMASCAQKHQTSAENAASLCCAPERPKRRPGLPDKEPATEITPASQGDNLDLDSKLTQQLIEFEKSLSGPSTEPKKIVRRFSIMDFYSEKDIVRGSSNSLPSRNFPERRKALRPPPPRPHTPTSTSPHLLVDQSPKPGPPLVVRPSRPAPLPPPTQQRLNTASPKPTSCALPGWEAPEKEGSEYTEKSPAQLFPCPSVLARIQDVEHDLDMHTRAQEELNLLLEEKQDESLRAETLETLKSYESTIQSLNLELQQLREMTLLSSQSSSLAAPSGSVSTEKPEQRMLEKRAKVVAELLQTEKDYIRDLEMCVERVMVPLQQAQVPNIDFEGLFGNMQTVIKVSKQLLAALEITDAVGPVFLDHRDELEGTYRLYCQNHDEAISLLDIYEKDERIQKHLQDYLADLKSLYHEWGCTNYINLGSFLIKPVQRIMRYPLLLMELLNSTPESHPDKAPLTSAVLAIKEINANINEYKRRKDLVLKYRKADEDSLMEKISKLNIHSIIKKSSRVSSHLKHLTGFAPQLKDEAFEETEKNFRMQERLIKSFIRDLSLYLQHIRESACVKVVAAMSIWDLCMERGHHDLEQFEKVHRYISDQLFTRFKERTERLVINPLNQLLNMFTGPYKLVQKRFDKLLDFYNCTERAEKLKDKKTLEDLQSARNNYEALNSQLLDELPKFQQYAQSLFTNCIHGYAEAHCDFVQKALEQLQPLLSLLKASDREGNLIAIFHEEHSRVLQQLQVFTFFPEALPAPRKPFERKTTDRQSSRKALLGMPSYMLQSEELRSSLLARYPPEKLFHVQRNFNAAQDLDVSLLEGDLVGVIKKKDPMGSQNRWLVDNGVTKGFVYSSFLKPYNPRCSHSDSSVVSHSSTESEHSGSSPSFHRQNSSSALTFNSNSMTVSFTSGLPQKQPQDTSPLRECVPETLGVSSNTGNPETGPSPCPSDPGFSCQRRPGNPADGTREISQPASTLRGCQRRSLHSEVLGYPVPGRSDQGSDSIKGTSRACQTAGDRDRGLGSSEAEGNQVYFAIYTFKARNPNELTVLANQRLRILEFKDVTGNTEWWLAEVNGKKGYVPSNYIRKTEYT.

Methionine 1 is subject to N-acetylmethionine. 3 consecutive SH3 domains span residues 2–61 (EPGS…IVTI), 66–126 (EGER…ELCL), and 145–204 (YSMG…LLGP). The interval 209-242 (DESVNAGSGDDSTLNDEVDVSPEEVESEGDEDDQ) is disordered. Positions 221–242 (TLNDEVDVSPEEVESEGDEDDQ) are enriched in acidic residues. Residues 243 to 302 (QAGTYGIALYRFQALESNELDFEVGDKIRILGTLEDGWLEGRLKGKTGIFPHRFVKLCPS) form the SH3 4 domain. 2 disordered regions span residues 307 to 361 (ETMA…EEPL) and 375 to 437 (GQDE…SRQC). The segment covering 400–410 (PDLSQEVNGIS) has biased composition (polar residues). The residue at position 494 (serine 494) is a Phosphoserine. 2 disordered regions span residues 519-547 (PERP…DNLD) and 590-681 (RGSS…SEYT). Positions 617-626 (TPTSTSPHLL) are enriched in low complexity. Positions 632–651 (KPGPPLVVRPSRPAPLPPPT) are enriched in pro residues. Residues 652-662 (QQRLNTASPKP) are compositionally biased toward polar residues. Basic and acidic residues predominate over residues 672-681 (APEKEGSEYT). Residue serine 684 is modified to Phosphoserine. A coiled-coil region spans residues 705 to 755 (LDMHTRAQEELNLLLEEKQDESLRAETLETLKSYESTIQSLNLELQQLREM). The DH domain maps to 784 to 967 (KRAKVVAELL…KEINANINEY (184 aa)). The BAR domain occupies 1008–1217 (LKHLTGFAPQ…LKASDREGNL (210 aa)). The region spanning 1285-1348 (PPEKLFHVQR…YSSFLKPYNP (64 aa)) is the SH3 5 domain. A compositionally biased stretch (low complexity) spans 1353 to 1375 (SDSSVVSHSSTESEHSGSSPSFH). 2 disordered regions span residues 1353-1381 (SDSS…NSSS) and 1415-1510 (ETLG…LGSS). Polar residues-rich tracts occupy residues 1418 to 1428 (GVSSNTGNPET) and 1484 to 1497 (DQGS…SRAC). The region spanning 1513–1576 (EGNQVYFAIY…PSNYIRKTEY (64 aa)) is the SH3 6 domain.

As to quaternary structure, binds DNM1 via its N-terminal SH3 domains. The C-terminal SH3 domain binds a complex containing actin, tubulin, Hsp70 and actin-regulatory proteins, such as ENAH, EVL, WIRE, CR16, WAVE1 and NAP1L1. Interacts with FASLG. Interacts (via SH3 domain 6) with WASL. Interacts (via SH3 domain 6) interacts with ENAH. Interacts (via C-terminal domain) with TJP1; required for the apical cell-cell junction localization of DNMBP. In terms of tissue distribution, widely expressed.

It is found in the cytoplasm. The protein resides in the golgi apparatus. It localises to the golgi stack. The protein localises to the cytoskeleton. Its subcellular location is the synapse. It is found in the cell junction. Plays a critical role as a guanine nucleotide exchange factor (GEF) for CDC42 in several intracellular processes associated with the actin and microtubule cytoskeleton. Regulates the structure of apical junctions in epithelial cells. Participates in the normal lumenogenesis of epithelial cell cysts by regulating spindle orientation. Plays a role in ciliogenesis. May play a role in membrane trafficking between the cell surface and the Golgi. In Rattus norvegicus (Rat), this protein is Dynamin-binding protein.